Here is a 242-residue protein sequence, read N- to C-terminus: 1-(5-phosphoribosyl)-5-[(5-phosphoribosylamino)methylideneamino] imidazole-4-carboxamide isomerase (242 aa).

Asp8 (proton acceptor) is an active-site residue. The Proton donor role is filled by Asp129.

This sequence belongs to the HisA/HisF family.

Its subcellular location is the cytoplasm. It catalyses the reaction 1-(5-phospho-beta-D-ribosyl)-5-[(5-phospho-beta-D-ribosylamino)methylideneamino]imidazole-4-carboxamide = 5-[(5-phospho-1-deoxy-D-ribulos-1-ylimino)methylamino]-1-(5-phospho-beta-D-ribosyl)imidazole-4-carboxamide. The protein operates within amino-acid biosynthesis; L-histidine biosynthesis; L-histidine from 5-phospho-alpha-D-ribose 1-diphosphate: step 4/9. This is 1-(5-phosphoribosyl)-5-[(5-phosphoribosylamino)methylideneamino] imidazole-4-carboxamide isomerase from Clostridium botulinum (strain Okra / Type B1).